A 192-amino-acid polypeptide reads, in one-letter code: Phosphoheptose isomerase (192 aa).

Residues 34–192 (LADALGNGKK…LEKRLFGERR (159 aa)) enclose the SIS domain. 49 to 51 (NGG) provides a ligand contact to substrate. His58 and Glu62 together coordinate Zn(2+). Residues Glu62, 91 to 92 (ND), 117 to 119 (STS), Ser122, and Gln169 each bind substrate. The Zn(2+) site is built by Gln169 and His177.

This sequence belongs to the SIS family. GmhA subfamily. In terms of assembly, homotetramer. Zn(2+) serves as cofactor.

It localises to the cytoplasm. It carries out the reaction 2 D-sedoheptulose 7-phosphate = D-glycero-alpha-D-manno-heptose 7-phosphate + D-glycero-beta-D-manno-heptose 7-phosphate. The protein operates within carbohydrate biosynthesis; D-glycero-D-manno-heptose 7-phosphate biosynthesis; D-glycero-alpha-D-manno-heptose 7-phosphate and D-glycero-beta-D-manno-heptose 7-phosphate from sedoheptulose 7-phosphate: step 1/1. In terms of biological role, catalyzes the isomerization of sedoheptulose 7-phosphate in D-glycero-D-manno-heptose 7-phosphate. This is Phosphoheptose isomerase from Geotalea daltonii (strain DSM 22248 / JCM 15807 / FRC-32) (Geobacter daltonii).